A 124-amino-acid polypeptide reads, in one-letter code: Small ribosomal subunit protein uS12 (124 aa).

The residue at position 89 (Asp-89) is a 3-methylthioaspartic acid.

The protein belongs to the universal ribosomal protein uS12 family. As to quaternary structure, part of the 30S ribosomal subunit. Contacts proteins S8 and S17. May interact with IF1 in the 30S initiation complex.

Its function is as follows. With S4 and S5 plays an important role in translational accuracy. Functionally, interacts with and stabilizes bases of the 16S rRNA that are involved in tRNA selection in the A site and with the mRNA backbone. Located at the interface of the 30S and 50S subunits, it traverses the body of the 30S subunit contacting proteins on the other side and probably holding the rRNA structure together. The combined cluster of proteins S8, S12 and S17 appears to hold together the shoulder and platform of the 30S subunit. The chain is Small ribosomal subunit protein uS12 from Mannheimia succiniciproducens (strain KCTC 0769BP / MBEL55E).